Here is a 282-residue protein sequence, read N- to C-terminus: Bis(5'-nucleosyl)-tetraphosphatase, symmetrical (282 aa).

It belongs to the Ap4A hydrolase family.

It carries out the reaction P(1),P(4)-bis(5'-adenosyl) tetraphosphate + H2O = 2 ADP + 2 H(+). In terms of biological role, hydrolyzes diadenosine 5',5'''-P1,P4-tetraphosphate to yield ADP. The polypeptide is Bis(5'-nucleosyl)-tetraphosphatase, symmetrical (Salmonella arizonae (strain ATCC BAA-731 / CDC346-86 / RSK2980)).